We begin with the raw amino-acid sequence, 899 residues long: Linoleate 13S-lipoxygenase 2-1, chloroplastic (899 aa).

The N-terminal 40 residues, Met-1–Arg-40, are a transit peptide targeting the chloroplast. One can recognise a PLAT domain in the interval Val-78–Thr-200. Residues Ser-203 to Ile-899 enclose the Lipoxygenase domain. Residues Ser-252–Glu-287 form a disordered region. The segment covering Arg-271–Ser-280 has biased composition (basic residues). Fe cation contacts are provided by His-557, His-562, His-749, Asn-753, and Ile-899.

Belongs to the lipoxygenase family. Monomer. The cofactor is Fe cation. As to expression, expressed in leaves and floral buds.

The protein localises to the plastid. Its subcellular location is the chloroplast stroma. It is found in the chloroplast thylakoid. The catalysed reaction is (9Z,12Z)-octadecadienoate + O2 = (13S)-hydroperoxy-(9Z,11E)-octadecadienoate. It catalyses the reaction (9Z,12Z,15Z)-octadecatrienoate + O2 = (13S)-hydroperoxy-(9Z,11E,15Z)-octadecatrienoate. The protein operates within lipid metabolism; oxylipin biosynthesis. In terms of biological role, plant lipoxygenase involved in a number of diverse aspects of plant physiology including growth and development, pest resistance, and senescence. May not be involved in the bulk production of jasmonate upon wounding. Catalyzes the hydroperoxidation of lipids containing a cis,cis-1,4-pentadiene structure. Linolenic acid is the preferred substrate, before linoleic and arachidonic acids. Also has some activity with phosphatidylglycerol, but not with galactolipids. This chain is Linoleate 13S-lipoxygenase 2-1, chloroplastic, found in Solanum tuberosum (Potato).